The primary structure comprises 211 residues: Ribosomal RNA small subunit methyltransferase G (211 aa).

Residues Gly-72, Phe-77, 125–126 (IE), and Arg-141 contribute to the S-adenosyl-L-methionine site.

It belongs to the methyltransferase superfamily. RNA methyltransferase RsmG family.

It is found in the cytoplasm. It carries out the reaction guanosine(527) in 16S rRNA + S-adenosyl-L-methionine = N(7)-methylguanosine(527) in 16S rRNA + S-adenosyl-L-homocysteine. Specifically methylates the N7 position of guanine in position 527 of 16S rRNA. This chain is Ribosomal RNA small subunit methyltransferase G, found in Allorhizobium ampelinum (strain ATCC BAA-846 / DSM 112012 / S4) (Agrobacterium vitis (strain S4)).